A 359-amino-acid chain; its full sequence is Fructose-bisphosphate aldolase class 2 (359 aa).

Residue S62 participates in D-glyceraldehyde 3-phosphate binding. D110 acts as the Proton donor in catalysis. 4 residues coordinate Zn(2+): H111, D145, E175, and H227. Position 228 (G228) interacts with dihydroxyacetone phosphate. H265 contacts Zn(2+). Residues 266–268 (GGS) and 287–290 (NIDT) contribute to the dihydroxyacetone phosphate site.

This sequence belongs to the class II fructose-bisphosphate aldolase family. Zn(2+) is required as a cofactor.

The catalysed reaction is beta-D-fructose 1,6-bisphosphate = D-glyceraldehyde 3-phosphate + dihydroxyacetone phosphate. The protein operates within carbohydrate degradation; glycolysis; D-glyceraldehyde 3-phosphate and glycerone phosphate from D-glucose: step 4/4. Its function is as follows. Catalyzes the aldol condensation of dihydroxyacetone phosphate (DHAP or glycerone-phosphate) with glyceraldehyde 3-phosphate (G3P) to form fructose 1,6-bisphosphate (FBP) in gluconeogenesis and the reverse reaction in glycolysis. The polypeptide is Fructose-bisphosphate aldolase class 2 (fbaA) (Buchnera aphidicola subsp. Baizongia pistaciae (strain Bp)).